Consider the following 839-residue polypeptide: Amyloid-beta A4 precursor protein-binding family A member 1 (839 aa).

3 disordered regions span residues 1–118 (MNHL…DESA), 235–346 (RLHH…EKRD), and 362–437 (VKTR…ESRK). Acidic residues predominate over residues 23 to 38 (ESVEADLEHPEVEEEQ). Position 79 is a phosphoserine (serine 79). Basic and acidic residues-rich tracts occupy residues 103–112 (DGYEAERAQD) and 237–255 (HHYD…KEAE). The segment at 227 to 315 (YRQEALGARL…TPGGGHPDSP (89 aa)) is munc-18-1 binding. A phosphoserine mark is found at serine 243, serine 247, serine 249, serine 264, serine 281, and serine 286. Threonine 306 carries the phosphothreonine modification. Serine 314 and serine 369 each carry phosphoserine. Position 372 is a phosphothreonine (threonine 372). Positions 375–438 (EPKEPIWVMR…ASTNKESRKS (64 aa)) are LIN-2/CASK binding. Basic and acidic residues predominate over residues 389–400 (PTRDCDDQRPVD). Positions 401-417 (GDSPSPGSSSPLGAESS) are enriched in low complexity. Serine 403, serine 405, serine 410, and serine 570 each carry phosphoserine. The PID domain occupies 459-645 (DGIIFAANYL…LLNTQDMYND (187 aa)). The segment at 628 to 643 (LSQKEYSDLLNTQDMY) is autoinhibitory helix linker. 2 consecutive PDZ domains span residues 658-744 (DVFI…IVRC) and 749-824 (TVLI…TMPA).

As to quaternary structure, part of a multimeric complex containing STXBP1 and STX1A. Interacts with STXBP1. Component of the brain-specific heterotrimeric complex (LIN-10-LIN-2-LIN-7 complex) composed of at least APBA1, CASK, and LIN7, which associates with the motor protein KIF17 to transport vesicles along microtubules. Within the complex, interacts (via PDZ domain) with the motor protein KIF17; the interaction is direct and is required for association of KIF17 with the cargo that is to be transported. Binds to the cytoplasmic domain of amyloid protein (APP). Interacts (via PDZ 1 and 2 domains) with FSPB. Isoform 2 interacts (via its truncated PID domain) with active, GTP-bound RAB6A and RAB6B. In terms of tissue distribution, brain. Detected in the cerebellum, hippocampus, olfactory system, piriform and entorhinal cortex, supraoptic nucleus of the hypothalamus, substantia nigra, and other mesencephalic areas.

It localises to the cytoplasm. It is found in the perinuclear region. The protein resides in the nucleus. The protein localises to the golgi apparatus. In terms of biological role, putative function in synaptic vesicle exocytosis by binding to Munc18-1, an essential component of the synaptic vesicle exocytotic machinery. May modulate processing of the amyloid-beta precursor protein (APP) and hence formation of APP-beta. This chain is Amyloid-beta A4 precursor protein-binding family A member 1 (Apba1), found in Rattus norvegicus (Rat).